Reading from the N-terminus, the 110-residue chain is Nucleoid-associated protein PsycPRwf_1729 (110 aa).

It belongs to the YbaB/EbfC family. As to quaternary structure, homodimer.

It localises to the cytoplasm. The protein localises to the nucleoid. In terms of biological role, binds to DNA and alters its conformation. May be involved in regulation of gene expression, nucleoid organization and DNA protection. The chain is Nucleoid-associated protein PsycPRwf_1729 from Psychrobacter sp. (strain PRwf-1).